A 342-amino-acid chain; its full sequence is Ribosomal RNA small subunit methyltransferase H (342 aa).

S-adenosyl-L-methionine is bound by residues 36–38 (GGH), Asp56, Phe82, Asp100, and Gln107. The disordered stretch occupies residues 309-342 (ENRESGMGKGHGAAASRFPTPDSRFPTSPNGDAP). The segment covering 333-342 (FPTSPNGDAP) has biased composition (polar residues).

This sequence belongs to the methyltransferase superfamily. RsmH family.

It is found in the cytoplasm. It catalyses the reaction cytidine(1402) in 16S rRNA + S-adenosyl-L-methionine = N(4)-methylcytidine(1402) in 16S rRNA + S-adenosyl-L-homocysteine + H(+). Functionally, specifically methylates the N4 position of cytidine in position 1402 (C1402) of 16S rRNA. This is Ribosomal RNA small subunit methyltransferase H from Xanthomonas campestris pv. campestris (strain B100).